We begin with the raw amino-acid sequence, 236 residues long: UPF0173 metal-dependent hydrolase Mnod_3315 (236 aa).

The protein belongs to the UPF0173 family.

This chain is UPF0173 metal-dependent hydrolase Mnod_3315, found in Methylobacterium nodulans (strain LMG 21967 / CNCM I-2342 / ORS 2060).